The sequence spans 73 residues: Putative membrane protein insertion efficiency factor (73 aa).

It belongs to the UPF0161 family.

Its subcellular location is the cell inner membrane. Could be involved in insertion of integral membrane proteins into the membrane. This Parabacteroides distasonis (strain ATCC 8503 / DSM 20701 / CIP 104284 / JCM 5825 / NCTC 11152) protein is Putative membrane protein insertion efficiency factor.